We begin with the raw amino-acid sequence, 244 residues long: Adenosylcobinamide-GDP ribazoletransferase (244 aa).

The next 5 membrane-spanning stretches (helical) occupy residues 33–53, 57–77, 109–129, 132–152, and 176–196; these read WFAVVGLLVGALVAALGWLGA, PWLAALLMLVTWVWVTGGLHL, FAVITLALQLLAKLVLLMLAV, GVGWSALVLLPAWARLGAVWW, and FWLSWLLLAALSAWLAPVLLL.

It belongs to the CobS family. Mg(2+) serves as cofactor.

It is found in the cell inner membrane. It catalyses the reaction alpha-ribazole + adenosylcob(III)inamide-GDP = adenosylcob(III)alamin + GMP + H(+). The enzyme catalyses alpha-ribazole 5'-phosphate + adenosylcob(III)inamide-GDP = adenosylcob(III)alamin 5'-phosphate + GMP + H(+). The protein operates within cofactor biosynthesis; adenosylcobalamin biosynthesis; adenosylcobalamin from cob(II)yrinate a,c-diamide: step 7/7. Joins adenosylcobinamide-GDP and alpha-ribazole to generate adenosylcobalamin (Ado-cobalamin). Also synthesizes adenosylcobalamin 5'-phosphate from adenosylcobinamide-GDP and alpha-ribazole 5'-phosphate. This Laribacter hongkongensis (strain HLHK9) protein is Adenosylcobinamide-GDP ribazoletransferase.